Reading from the N-terminus, the 739-residue chain is Copalyl diphosphate synthase 1 (739 aa).

Lys-154 lines the substrate pocket. Positions 287 and 289 each coordinate Mg(2+). Positions Asp-287–Asp-290 match the DXDD motif motif. Position 373 (Lys-373) interacts with substrate.

The protein belongs to the terpene synthase family. Mg(2+) serves as cofactor.

The enzyme catalyses (2E,6E,10E)-geranylgeranyl diphosphate = (+)-copalyl diphosphate. The protein operates within secondary metabolite biosynthesis; terpenoid biosynthesis. In terms of biological role, monofunctional diterpene synthase converting geranylgeranyl diphosphate to copalyl diphosphate. The polypeptide is Copalyl diphosphate synthase 1 (CPS1) (Selaginella moellendorffii (Spikemoss)).